Consider the following 133-residue polypeptide: Protein PsiE homolog (133 aa).

4 consecutive transmembrane segments (helical) span residues 13-33 (LQWI…IFLI), 55-75 (VESI…IKYF), 81-101 (FPLR…IIVS), and 105-125 (PMET…LYIS).

It belongs to the PsiE family.

It is found in the cell membrane. The sequence is that of Protein PsiE homolog from Bacillus cereus (strain ATCC 10987 / NRS 248).